Here is a 394-residue protein sequence, read N- to C-terminus: Phosphopentomutase (394 aa).

Asp-14, Asp-287, His-292, Asp-328, His-329, and His-340 together coordinate Mn(2+).

Belongs to the phosphopentomutase family. Mn(2+) is required as a cofactor.

It is found in the cytoplasm. It catalyses the reaction 2-deoxy-alpha-D-ribose 1-phosphate = 2-deoxy-D-ribose 5-phosphate. It carries out the reaction alpha-D-ribose 1-phosphate = D-ribose 5-phosphate. The protein operates within carbohydrate degradation; 2-deoxy-D-ribose 1-phosphate degradation; D-glyceraldehyde 3-phosphate and acetaldehyde from 2-deoxy-alpha-D-ribose 1-phosphate: step 1/2. In terms of biological role, isomerase that catalyzes the conversion of deoxy-ribose 1-phosphate (dRib-1-P) and ribose 1-phosphate (Rib-1-P) to deoxy-ribose 5-phosphate (dRib-5-P) and ribose 5-phosphate (Rib-5-P), respectively. This chain is Phosphopentomutase, found in Listeria monocytogenes serovar 1/2a (strain ATCC BAA-679 / EGD-e).